Reading from the N-terminus, the 323-residue chain is tRNA dimethylallyltransferase (323 aa).

Position 12-19 (12-19 (GPTAAGKT)) interacts with ATP. 14–19 (TAAGKT) provides a ligand contact to substrate. 2 interaction with substrate tRNA regions span residues 37–40 (DSAL) and 161–165 (QRLTR).

This sequence belongs to the IPP transferase family. Monomer. Requires Mg(2+) as cofactor.

The catalysed reaction is adenosine(37) in tRNA + dimethylallyl diphosphate = N(6)-dimethylallyladenosine(37) in tRNA + diphosphate. Functionally, catalyzes the transfer of a dimethylallyl group onto the adenine at position 37 in tRNAs that read codons beginning with uridine, leading to the formation of N6-(dimethylallyl)adenosine (i(6)A). In Pseudomonas fluorescens (strain ATCC BAA-477 / NRRL B-23932 / Pf-5), this protein is tRNA dimethylallyltransferase.